We begin with the raw amino-acid sequence, 610 residues long: DNA mismatch repair protein MutL (610 aa).

It belongs to the DNA mismatch repair MutL/HexB family.

Functionally, this protein is involved in the repair of mismatches in DNA. It is required for dam-dependent methyl-directed DNA mismatch repair. May act as a 'molecular matchmaker', a protein that promotes the formation of a stable complex between two or more DNA-binding proteins in an ATP-dependent manner without itself being part of a final effector complex. This is DNA mismatch repair protein MutL from Rickettsia rickettsii (strain Iowa).